A 530-amino-acid chain; its full sequence is Glutamate--cysteine ligase (530 aa).

The protein belongs to the glutamate--cysteine ligase type 1 family. Type 1 subfamily.

It carries out the reaction L-cysteine + L-glutamate + ATP = gamma-L-glutamyl-L-cysteine + ADP + phosphate + H(+). The protein operates within sulfur metabolism; glutathione biosynthesis; glutathione from L-cysteine and L-glutamate: step 1/2. This is Glutamate--cysteine ligase from Azotobacter vinelandii (strain DJ / ATCC BAA-1303).